Reading from the N-terminus, the 198-residue chain is dTTP/UTP pyrophosphatase (198 aa).

Residue Asp75 is the Proton acceptor of the active site.

It belongs to the Maf family. YhdE subfamily. Requires a divalent metal cation as cofactor.

It localises to the cytoplasm. It catalyses the reaction dTTP + H2O = dTMP + diphosphate + H(+). It carries out the reaction UTP + H2O = UMP + diphosphate + H(+). In terms of biological role, nucleoside triphosphate pyrophosphatase that hydrolyzes dTTP and UTP. May have a dual role in cell division arrest and in preventing the incorporation of modified nucleotides into cellular nucleic acids. The protein is dTTP/UTP pyrophosphatase of Wolbachia sp. subsp. Brugia malayi (strain TRS).